The following is a 477-amino-acid chain: Bifunctional protein HldE (477 aa).

Positions 1–319 (MTPPLPGFRD…AALGGGPAPA (319 aa)) are ribokinase. Position 195–198 (195–198 (NLAE)) interacts with ATP. D264 is a catalytic residue. The interval 346-477 (MTNGCFDLLH…DLIARIRSRG (132 aa)) is cytidylyltransferase.

This sequence in the N-terminal section; belongs to the carbohydrate kinase PfkB family. In the C-terminal section; belongs to the cytidylyltransferase family. Homodimer.

It carries out the reaction D-glycero-beta-D-manno-heptose 7-phosphate + ATP = D-glycero-beta-D-manno-heptose 1,7-bisphosphate + ADP + H(+). It catalyses the reaction D-glycero-beta-D-manno-heptose 1-phosphate + ATP + H(+) = ADP-D-glycero-beta-D-manno-heptose + diphosphate. It participates in nucleotide-sugar biosynthesis; ADP-L-glycero-beta-D-manno-heptose biosynthesis; ADP-L-glycero-beta-D-manno-heptose from D-glycero-beta-D-manno-heptose 7-phosphate: step 1/4. Its pathway is nucleotide-sugar biosynthesis; ADP-L-glycero-beta-D-manno-heptose biosynthesis; ADP-L-glycero-beta-D-manno-heptose from D-glycero-beta-D-manno-heptose 7-phosphate: step 3/4. In terms of biological role, catalyzes the phosphorylation of D-glycero-D-manno-heptose 7-phosphate at the C-1 position to selectively form D-glycero-beta-D-manno-heptose-1,7-bisphosphate. Functionally, catalyzes the ADP transfer from ATP to D-glycero-beta-D-manno-heptose 1-phosphate, yielding ADP-D-glycero-beta-D-manno-heptose. In Halorhodospira halophila (strain DSM 244 / SL1) (Ectothiorhodospira halophila (strain DSM 244 / SL1)), this protein is Bifunctional protein HldE.